Reading from the N-terminus, the 236-residue chain is Methylosome subunit pICln (236 aa).

The disordered stretch occupies residues 1 to 20 (MSFLKSFPPPGPTEGLRHQQ). Ser-2 carries the post-translational modification N-acetylserine. Phosphoserine is present on residues Ser-101, Ser-143, Ser-192, Ser-194, Ser-197, and Ser-209. Residue Thr-222 is modified to Phosphothreonine.

Belongs to the pICln (TC 1.A.47) family. As to quaternary structure, component of the methylosome, a 20S complex containing at least PRMT5/SKB1, WDR77/MEP50 and CLNS1A/pICln. May mediate SNRPD1 and SNRPD3 methylation. Forms a 6S pICln-Sm complex composed of CLNS1A/pICln, SNRPD1, SNRPD2, SNRPE, SNRPF and SNRPG; ring-like structure where CLNS1A/pICln mimics additional Sm proteins and which is unable to assemble into the core snRNP. Interacts with LSM10 and LSM11. In terms of tissue distribution, widely distributed but expressed more abundantly in nonpigmented ciliary epithelial cells than in pigmented ones.

It localises to the cytoplasm. The protein localises to the cytosol. The protein resides in the nucleus. Its subcellular location is the cytoskeleton. Its function is as follows. Involved in both the assembly of spliceosomal snRNPs and the methylation of Sm proteins. Chaperone that regulates the assembly of spliceosomal U1, U2, U4 and U5 small nuclear ribonucleoproteins (snRNPs), the building blocks of the spliceosome, and thereby plays an important role in the splicing of cellular pre-mRNAs. Most spliceosomal snRNPs contain a common set of Sm proteins SNRPB, SNRPD1, SNRPD2, SNRPD3, SNRPE, SNRPF and SNRPG that assemble in a heptameric protein ring on the Sm site of the small nuclear RNA to form the core snRNP (Sm core). In the cytosol, the Sm proteins SNRPD1, SNRPD2, SNRPE, SNRPF and SNRPG are trapped in an inactive 6S pICln-Sm complex by the chaperone CLNS1A that controls the assembly of the core snRNP. Dissociation by the SMN complex of CLNS1A from the trapped Sm proteins and their transfer to an SMN-Sm complex triggers the assembly of core snRNPs and their transport to the nucleus. The chain is Methylosome subunit pICln (CLNS1A) from Oryctolagus cuniculus (Rabbit).